A 382-amino-acid polypeptide reads, in one-letter code: 2-epi-valiolone synthase (382 aa).

Residues Glu-92 to Lys-95, Gly-124 to Asp-128, Thr-148 to Thr-149, Lys-161, Lys-170, and His-188 to Thr-191 contribute to the NAD(+) site. 3 residues coordinate Zn(2+): Glu-203, His-266, and His-283.

It belongs to the sugar phosphate cyclases superfamily. EVS family. It depends on NAD(+) as a cofactor. Co(2+) serves as cofactor. Zn(2+) is required as a cofactor.

It catalyses the reaction D-sedoheptulose 7-phosphate = 2-epi-valiolone + phosphate. Its function is as follows. Catalyzes the conversion of sedoheptulose 7-phosphate to 2-epi-valiolone, which may serve as an alternative precursor for aminocyclitol biosynthesis. The sequence is that of 2-epi-valiolone synthase from Actinosynnema mirum (strain ATCC 29888 / DSM 43827 / JCM 3225 / NBRC 14064 / NCIMB 13271 / NRRL B-12336 / IMRU 3971 / 101).